An 875-amino-acid chain; its full sequence is Alanine--tRNA ligase (875 aa).

Residues His-564, His-568, Cys-666, and His-670 each contribute to the Zn(2+) site.

The protein belongs to the class-II aminoacyl-tRNA synthetase family. As to quaternary structure, homotetramer. The cofactor is Zn(2+).

Its subcellular location is the cytoplasm. It catalyses the reaction tRNA(Ala) + L-alanine + ATP = L-alanyl-tRNA(Ala) + AMP + diphosphate. Functionally, catalyzes the attachment of alanine to tRNA(Ala) in a two-step reaction: alanine is first activated by ATP to form Ala-AMP and then transferred to the acceptor end of tRNA(Ala). Also edits incorrectly charged Ser-tRNA(Ala) and Gly-tRNA(Ala) via its editing domain. The polypeptide is Alanine--tRNA ligase (Enterobacter sp. (strain 638)).